The chain runs to 1060 residues: Protein transport protein Sec16B (1060 aa).

Positions 1–86 (MELWAPQRLP…GDWHQPVSGV (86 aa)) are disordered. The required for endoplasmic reticulum localization stretch occupies residues 34–224 (RPVPHSWHNG…PSLASESNLL (191 aa)). Basic and acidic residues predominate over residues 41–50 (HNGERFHQWQ). Over residues 51–60 (DNRGSPQPQQ) the composition is skewed to polar residues. A phosphoserine mark is found at serine 55, serine 143, serine 167, serine 188, and serine 191. Disordered regions lie at residues 163 to 236 (ENQH…SSSY), 245 to 264 (APERDDPPASAAWSPVQADV), 711 to 733 (KVAGDIGDPHPTRSDISGAGGTT), 770 to 796 (PSPQQPFPLQPGSYPAGGGAGQTGTPR), and 834 to 1060 (PGEN…TQPC). 2 stretches are compositionally biased toward polar residues: residues 165-195 (QHSPFGTNSETHFQSNSRNPCKDSPASNSGQ) and 213-222 (NKPSLASESN). Residues 223-236 (LLQQRESGLSSSSY) show a composition bias toward low complexity. Residues serine 254 and serine 258 each carry the phosphoserine modification. The segment at 271-713 (APMKFYIPHV…LRRQLEQKVA (443 aa)) is central conserved domain (CCD); required for localization to endoplasmic reticulum exit sites. Polar residues predominate over residues 837–847 (NTVSQETSQPP). Threonine 858 carries the phosphothreonine modification. Phosphoserine is present on residues serine 868, serine 871, serine 874, serine 882, and serine 883. Basic and acidic residues-rich tracts occupy residues 875–890 (AKEDEKESSDEADKNS) and 899–908 (KLGDGKEHTK). A compositionally biased stretch (low complexity) spans 909–918 (SSGFGWFSWF). Acidic residues predominate over residues 930-941 (GDEDSSDSPDSE). Residues 991-1001 (AAAGAGVGGLS) are compositionally biased toward gly residues. The segment covering 1031–1046 (NPSQVPQLPTATSLNR) has biased composition (polar residues).

Belongs to the SEC16 family. In terms of assembly, SEC16A and SEC16B are each present in multiple copies in a heteromeric complex. Interacts with TFG. Interacts with SEC13. In terms of tissue distribution, ubiquitous.

The protein localises to the endoplasmic reticulum membrane. Its subcellular location is the golgi apparatus membrane. In terms of biological role, plays a role in the organization of the endoplasmic reticulum exit sites (ERES), also known as transitional endoplasmic reticulum (tER). Required for secretory cargo traffic from the endoplasmic reticulum to the Golgi apparatus. Involved in peroxisome biogenesis. Regulates the transport of peroxisomal biogenesis factors PEX3 and PEX16 from the ER to peroxisomes. The chain is Protein transport protein Sec16B (SEC16B) from Homo sapiens (Human).